A 149-amino-acid chain; its full sequence is D-aminoacyl-tRNA deacylase (149 aa).

Positions 137 to 138 (GP) match the Gly-cisPro motif, important for rejection of L-amino acids motif.

Belongs to the DTD family. Homodimer.

It is found in the cytoplasm. It carries out the reaction glycyl-tRNA(Ala) + H2O = tRNA(Ala) + glycine + H(+). The catalysed reaction is a D-aminoacyl-tRNA + H2O = a tRNA + a D-alpha-amino acid + H(+). Functionally, an aminoacyl-tRNA editing enzyme that deacylates mischarged D-aminoacyl-tRNAs. Also deacylates mischarged glycyl-tRNA(Ala), protecting cells against glycine mischarging by AlaRS. Acts via tRNA-based rather than protein-based catalysis; rejects L-amino acids rather than detecting D-amino acids in the active site. By recycling D-aminoacyl-tRNA to D-amino acids and free tRNA molecules, this enzyme counteracts the toxicity associated with the formation of D-aminoacyl-tRNA entities in vivo and helps enforce protein L-homochirality. The polypeptide is D-aminoacyl-tRNA deacylase (Clostridium kluyveri (strain ATCC 8527 / DSM 555 / NBRC 12016 / NCIMB 10680 / K1)).